A 410-amino-acid polypeptide reads, in one-letter code: Multifunctional CCA protein (410 aa).

Positions 8 and 11 each coordinate ATP. Positions 8 and 11 each coordinate CTP. Residues Asp21 and Asp23 each contribute to the Mg(2+) site. ATP contacts are provided by Arg91, Arg137, and Arg140. Positions 91, 137, and 140 each coordinate CTP. The 102-residue stretch at 228 to 329 folds into the HD domain; it reads TGVHVLSVLQ…LELLQSFDVY (102 aa).

The protein belongs to the tRNA nucleotidyltransferase/poly(A) polymerase family. Bacterial CCA-adding enzyme type 1 subfamily. In terms of assembly, monomer. Can also form homodimers and oligomers. Mg(2+) is required as a cofactor. Ni(2+) serves as cofactor.

The catalysed reaction is a tRNA precursor + 2 CTP + ATP = a tRNA with a 3' CCA end + 3 diphosphate. The enzyme catalyses a tRNA with a 3' CCA end + 2 CTP + ATP = a tRNA with a 3' CCACCA end + 3 diphosphate. Catalyzes the addition and repair of the essential 3'-terminal CCA sequence in tRNAs without using a nucleic acid template. Adds these three nucleotides in the order of C, C, and A to the tRNA nucleotide-73, using CTP and ATP as substrates and producing inorganic pyrophosphate. tRNA 3'-terminal CCA addition is required both for tRNA processing and repair. Also involved in tRNA surveillance by mediating tandem CCA addition to generate a CCACCA at the 3' terminus of unstable tRNAs. While stable tRNAs receive only 3'-terminal CCA, unstable tRNAs are marked with CCACCA and rapidly degraded. The protein is Multifunctional CCA protein of Pseudomonas aeruginosa (strain ATCC 15692 / DSM 22644 / CIP 104116 / JCM 14847 / LMG 12228 / 1C / PRS 101 / PAO1).